The sequence spans 148 residues: SPbeta prophage-derived disulfide bond formation protein B (148 aa).

The chain crosses the membrane as a helical span at residues 7–26 (KSFFLLLFFLSFFGTMASLF). Cys36 and Cys39 form a disulfide bridge. 2 helical membrane-spanning segments follow: residues 41–60 (YQRIFLYPIPIILLIGLLKK) and 67–84 (YVVFLSSIGLIIAFYHYI). Cys95 and Cys102 form a disulfide bridge. Residues 111–135 (GFITLPLMSSVCFALIFGIGLKLII) form a helical membrane-spanning segment.

It belongs to the DsbB family. BdbC subfamily.

It localises to the cell membrane. Functionally, important but not absolutely essential for the production of the lantibiotic sublancin 168, it may also be required for the stability of other secreted proteins. Not required for competence for DNA uptake. This chain is SPbeta prophage-derived disulfide bond formation protein B (bdbB), found in Bacillus subtilis (strain 168).